The primary structure comprises 461 residues: Asparagine--tRNA ligase (461 aa).

This sequence belongs to the class-II aminoacyl-tRNA synthetase family. In terms of assembly, homodimer.

Its subcellular location is the cytoplasm. The enzyme catalyses tRNA(Asn) + L-asparagine + ATP = L-asparaginyl-tRNA(Asn) + AMP + diphosphate + H(+). This Geotalea uraniireducens (strain Rf4) (Geobacter uraniireducens) protein is Asparagine--tRNA ligase.